Here is an 857-residue protein sequence, read N- to C-terminus: DNA mismatch repair protein MutS (857 aa).

621–628 (GPNMGGKS) contacts ATP.

This sequence belongs to the DNA mismatch repair MutS family.

Its function is as follows. This protein is involved in the repair of mismatches in DNA. It is possible that it carries out the mismatch recognition step. This protein has a weak ATPase activity. This chain is DNA mismatch repair protein MutS, found in Francisella tularensis subsp. tularensis (strain SCHU S4 / Schu 4).